Consider the following 406-residue polypeptide: Probable 2,3-bisphosphoglycerate-independent phosphoglycerate mutase (406 aa).

Belongs to the BPG-independent phosphoglycerate mutase family. A-PGAM subfamily.

The catalysed reaction is (2R)-2-phosphoglycerate = (2R)-3-phosphoglycerate. It functions in the pathway carbohydrate degradation; glycolysis; pyruvate from D-glyceraldehyde 3-phosphate: step 3/5. In terms of biological role, catalyzes the interconversion of 2-phosphoglycerate and 3-phosphoglycerate. The sequence is that of Probable 2,3-bisphosphoglycerate-independent phosphoglycerate mutase from Thermus thermophilus (strain ATCC 27634 / DSM 579 / HB8).